The chain runs to 389 residues: S-adenosylmethionine synthase (389 aa).

H19 provides a ligand contact to ATP. D21 is a binding site for Mg(2+). E47 contacts K(+). L-methionine-binding residues include E60 and Q103. The flexible loop stretch occupies residues 103 to 113 (QSGDIAQGVDR). ATP is bound by residues 168–170 (DGK), 234–235 (RF), D243, 249–250 (RK), A266, and K270. Residue D243 participates in L-methionine binding. K274 serves as a coordination point for L-methionine.

This sequence belongs to the AdoMet synthase family. As to quaternary structure, homotetramer; dimer of dimers. Mg(2+) is required as a cofactor. The cofactor is K(+).

It is found in the cytoplasm. It carries out the reaction L-methionine + ATP + H2O = S-adenosyl-L-methionine + phosphate + diphosphate. It participates in amino-acid biosynthesis; S-adenosyl-L-methionine biosynthesis; S-adenosyl-L-methionine from L-methionine: step 1/1. Its function is as follows. Catalyzes the formation of S-adenosylmethionine (AdoMet) from methionine and ATP. The overall synthetic reaction is composed of two sequential steps, AdoMet formation and the subsequent tripolyphosphate hydrolysis which occurs prior to release of AdoMet from the enzyme. This is S-adenosylmethionine synthase from Nitratidesulfovibrio vulgaris (strain DSM 19637 / Miyazaki F) (Desulfovibrio vulgaris).